The following is a 215-amino-acid chain: Probable phosphoglycerate mutase GpmB (215 aa).

Substrate is bound by residues 8-15 (RHGETQWN), 21-22 (QG), R58, R60, 82-85 (ELNM), 104-105 (RR), and 151-152 (GI). The active-site Tele-phosphohistidine intermediate is H9. Catalysis depends on E82, which acts as the Proton donor/acceptor.

It belongs to the phosphoglycerate mutase family. GpmB subfamily.

It catalyses the reaction (2R)-2-phosphoglycerate = (2R)-3-phosphoglycerate. Its pathway is carbohydrate degradation; glycolysis; pyruvate from D-glyceraldehyde 3-phosphate: step 3/5. This chain is Probable phosphoglycerate mutase GpmB, found in Shigella boydii serotype 18 (strain CDC 3083-94 / BS512).